Consider the following 64-residue polypeptide: Alpha-conotoxin CnIC (64 aa).

An N-terminal signal peptide occupies residues 1–21 (MGMRMMFTVFLLVVLTTTVVS). Positions 22 to 47 (FPSDSASDVRDDEAKDERSDMYKSKR) are excised as a propeptide. Asparagine 48 carries the post-translational modification Deamidated asparagine; in CnIH; partial. 2 disulfides stabilise this stretch: cysteine 51–cysteine 56 and cysteine 52–cysteine 62. Cysteine 62 is subject to Cysteine amide.

This sequence belongs to the conotoxin A superfamily. Expressed by the venom duct.

The protein resides in the secreted. Functionally, alpha-conotoxins act on postsynaptic membranes, they bind to the nicotinic acetylcholine receptors (nAChR) and thus inhibit them. The sequence is that of Alpha-conotoxin CnIC from Conus consors (Singed cone).